The following is an 83-amino-acid chain: Weak neurotoxin WNTX33 (83 aa).

The N-terminal stretch at 1-21 (MKTLLLTLVVVTIVCLDLGYS) is a signal peptide. Cystine bridges form between Cys-24/Cys-45, Cys-38/Cys-62, Cys-64/Cys-75, and Cys-76/Cys-81.

This sequence belongs to the three-finger toxin family. Short-chain subfamily. In terms of tissue distribution, expressed by the venom gland.

The protein localises to the secreted. This chain is Weak neurotoxin WNTX33, found in Ophiophagus hannah (King cobra).